We begin with the raw amino-acid sequence, 671 residues long: MARLTKVYNTDDDDSGYVGRRNLPLVAGDKLMMLMDLNSKGLVIDSPLIRGRELEEFSRKFKLLTEAERRQSLEIDSASFMEVLNQCVQCVGCRRRVERLFHQLTETGHRTLDPLELRPTATLGIVEEKLKTPQALGTLLYRHHEVLNNLLDNKLRNKTRCVLHSLDAFRAKPFSETWREVWSAMKSNCRNELTIIETKELHDVLENYLKKHKFCSGCRTKIERAYKILIGEISSKEKGYAAQLYAHIRKCVPDQHIHVTTNKIEFLDALIKRAEPEVNGSYSKLRERHAKTLEIAQEEVLTCVGMIMYERLRRIYVSLREEERACQVLAAVGVHALCRSFDTFVEQKQGISNLELLYQEISRAERAKQIKREQKKLKKKKKKDEKKNLLHRQCDDTEANESDEEEEELRNEELDLEEESQMQHEELSDPGADDGIVIEAARSPEPEPELTSKPTKSKPKKQSKKKKQKKAAFTKMGNQKQMQATARVQPLDADHDQLDVASCISSSIAKTVGDKCEECLASMPNCPCEQDVRDSGYGSDPPSHAGSRTSSAISSPEGSEVSCSDGLCNHDVHDEDSDDLLFYSHQSQLDHKFSLLQMWDDFDEYDDKDEETYYIPQEVVMAFKCHREQVQRKREELRAKLRANFERLCVQHGVQTQVQKSKRTTSALVGQ.

2 disordered regions span residues 372–489 and 532–562; these read REQK…ARVQ and VRDS…SEVS. The span at 373–384 shows a compositional bias: basic residues; it reads EQKKLKKKKKKD. Residues 385–395 show a composition bias toward basic and acidic residues; sequence EKKNLLHRQCD. Over residues 396 to 420 the composition is skewed to acidic residues; it reads DTEANESDEEEEELRNEELDLEEES. Positions 455-472 are enriched in basic residues; it reads TKSKPKKQSKKKKQKKAA. Polar residues-rich tracts occupy residues 476 to 486 and 546 to 557; these read MGNQKQMQATA and GSRTSSAISSPE.

This is Gametogenetin-binding protein 2-like from Drosophila melanogaster (Fruit fly).